The chain runs to 167 residues: V-type proton ATPase subunit c' (167 aa).

Residues 1 to 13 (MAEIMADSELAPK) lie on the Lumenal side of the membrane. A helical membrane pass occupies residues 14–34 (FAPFIGMAGIAAAMIFGSAGA). The Cytoplasmic segment spans residues 35-59 (AYGTAKSGIGIAGVGTFRPDLIMKC). A helical membrane pass occupies residues 60 to 80 (LIPVVMSGIIAVYALVVAVLI). Topologically, residues 81–101 (AQDLGPPGSGQHYSLFNGFMH) are lumenal. A helical transmembrane segment spans residues 102 to 122 (LACGLSVGLTGLAAGYCIGIV). Over 123–140 (GDKGVRSFMLQSRIFVGM) the chain is Cytoplasmic. A helical transmembrane segment spans residues 141-161 (VLILIFGEVLGLYGLIVALIL). Topologically, residues 162–167 (NTKSKG) are lumenal.

This sequence belongs to the V-ATPase proteolipid subunit family. As to quaternary structure, V-ATPase is a heteromultimeric enzyme composed of a peripheral catalytic V1 complex (components A to H) attached to an integral membrane V0 proton pore complex (components: a, c, c', c'', d, e, f and VOA1). The decameric c-ring forms the proton-conducting pore, and is composed of eight proteolipid subunits c, one subunit c' and one subunit c''.

It is found in the vacuole membrane. Proton-conducting pore forming subunit of the V0 complex of vacuolar(H+)-ATPase (V-ATPase), a multisubunit enzyme composed of a peripheral complex (V1) that hydrolyzes ATP and a membrane integral complex (V0) that translocates protons. V-ATPase is responsible for acidifying and maintaining the pH of intracellular compartments. The sequence is that of V-type proton ATPase subunit c' (vma-11) from Neurospora crassa (strain ATCC 24698 / 74-OR23-1A / CBS 708.71 / DSM 1257 / FGSC 987).